A 128-amino-acid chain; its full sequence is Holo-[acyl-carrier-protein] synthase (128 aa).

Mg(2+) contacts are provided by D8 and E60.

The protein belongs to the P-Pant transferase superfamily. AcpS family. Requires Mg(2+) as cofactor.

It localises to the cytoplasm. The enzyme catalyses apo-[ACP] + CoA = holo-[ACP] + adenosine 3',5'-bisphosphate + H(+). In terms of biological role, transfers the 4'-phosphopantetheine moiety from coenzyme A to a Ser of acyl-carrier-protein. In Anaeromyxobacter sp. (strain K), this protein is Holo-[acyl-carrier-protein] synthase.